The following is a 490-amino-acid chain: Myocilin (490 aa).

The first 18 residues, 1 to 18 (MPATQLLLLACLVWGLGA), serve as a signal peptide directing secretion. Asn43 carries N-linked (GlcNAc...) asparagine glycosylation. Positions 52–169 (QAMSAIQDLQ…SQEVARLRRG (118 aa)) form a coiled coil. Positions 146 to 157 (REENEDLARRLD) are enriched in basic and acidic residues. The interval 146–188 (REENEDLARRLDSSSQEVARLRRGQCPQARGTPQDVPSGSREV) is disordered. In terms of domain architecture, Olfactomedin-like spans 230–489 (GCGELVWVGE…MVTYDLRLSE (260 aa)). Cysteines 231 and 419 form a disulfide. Positions 366, 414, 415, 463, and 464 each coordinate Ca(2+). Positions 488-490 (SEM) match the Microbody targeting signal motif.

In terms of assembly, homodimer (via N-terminus). Can also form higher oligomers. Interacts with OLFM3, FN1, NRCAM, GLDN and NFASC. Interacts (via N-terminus) with MYL2. Interacts with SFRP1, FRZB, FZD7, FZD10, FZD1 and WIF1; regulates Wnt signaling. Interacts with SNTA1; regulates muscle hypertrophy. Interacts with ERBB2 and ERBB3; activates ERBB2-ERBB3 signaling pathway. Interacts with SNCG; affects its secretion and its aggregation. In terms of processing, palmitoylated. Undergoes a calcium-dependent proteolytic cleavage at Arg-212 by CAPN2 in the endoplasmic reticulum. The result is the production of two fragments, one of 35 kDa containing the C-terminal olfactomedin-like domain, and another of 20 kDa containing the N-terminal leucine zipper-like domain. Post-translationally, glycosylated. As to expression, expressed in optic nerve head, ciliary body and retina.

It is found in the secreted. The protein localises to the golgi apparatus. It localises to the cytoplasmic vesicle. Its subcellular location is the extracellular space. The protein resides in the extracellular matrix. It is found in the extracellular exosome. The protein localises to the mitochondrion. It localises to the mitochondrion intermembrane space. Its subcellular location is the mitochondrion inner membrane. The protein resides in the mitochondrion outer membrane. It is found in the rough endoplasmic reticulum. The protein localises to the cell projection. It localises to the cilium. Its subcellular location is the endoplasmic reticulum. In terms of biological role, secreted glycoprotein regulating the activation of different signaling pathways in adjacent cells to control different processes including cell adhesion, cell-matrix adhesion, cytoskeleton organization and cell migration. Promotes substrate adhesion, spreading and formation of focal contacts. Negatively regulates cell-matrix adhesion and stress fiber assembly through Rho protein signal transduction. Modulates the organization of actin cytoskeleton by stimulating the formation of stress fibers through interactions with components of Wnt signaling pathways. Promotes cell migration through activation of PTK2 and the downstream phosphatidylinositol 3-kinase signaling. Plays a role in bone formation and promotes osteoblast differentiation in a dose-dependent manner through mitogen-activated protein kinase signaling. Mediates myelination in the peripheral nervous system through ERBB2/ERBB3 signaling. Plays a role as a regulator of muscle hypertrophy through the components of dystrophin-associated protein complex. Involved in positive regulation of mitochondrial depolarization. Plays a role in neurite outgrowth. May participate in the obstruction of fluid outflow in the trabecular meshwork. This Felis catus (Cat) protein is Myocilin (MYOC).